An 89-amino-acid polypeptide reads, in one-letter code: U-scoloptoxin(12)-Er1a (89 aa).

The first 22 residues, 1–22 (MKGLFLVVFLMWFVSQMNTEET), serve as a signal peptide directing secretion.

Belongs to the scoloptoxin-12 family. Post-translationally, contains 3 disulfide bonds. In terms of tissue distribution, expressed by the venom gland.

The protein localises to the secreted. The sequence is that of U-scoloptoxin(12)-Er1a from Ethmostigmus rubripes (Giant centipede).